The sequence spans 295 residues: MAQTIDIANPTRTQAILNEYGLRAKKKFGQNFLTDLNVLHNIVEAAEITAEDYVIEIGPGIGALTEQLARSAKKVLAFEIDSQMVEVLADTLKPYDNVKVIENDVLKVDLAKVISEEFGDNAHVKIVANLPYYITTPILIQLLRSNINWDNIVVMMQREVADRLNAAVGTKSYGVLTLTIQYFAQATLAIKVPASSFNPSPNVDSAVVKLTPLKPTTVVENVGKLFGVIKGSFSHRRKSLWNNMLQTYGKDAGTKEQLTVALKSAQIDPAIRAERLNLEQFTQLYLALRDQNLTQ.

Residues N31, L33, G58, E79, D104, and N129 each contribute to the S-adenosyl-L-methionine site.

This sequence belongs to the class I-like SAM-binding methyltransferase superfamily. rRNA adenine N(6)-methyltransferase family. RsmA subfamily.

Its subcellular location is the cytoplasm. The enzyme catalyses adenosine(1518)/adenosine(1519) in 16S rRNA + 4 S-adenosyl-L-methionine = N(6)-dimethyladenosine(1518)/N(6)-dimethyladenosine(1519) in 16S rRNA + 4 S-adenosyl-L-homocysteine + 4 H(+). Its function is as follows. Specifically dimethylates two adjacent adenosines (A1518 and A1519) in the loop of a conserved hairpin near the 3'-end of 16S rRNA in the 30S particle. May play a critical role in biogenesis of 30S subunits. The chain is Ribosomal RNA small subunit methyltransferase A from Leuconostoc mesenteroides subsp. mesenteroides (strain ATCC 8293 / DSM 20343 / BCRC 11652 / CCM 1803 / JCM 6124 / NCDO 523 / NBRC 100496 / NCIMB 8023 / NCTC 12954 / NRRL B-1118 / 37Y).